We begin with the raw amino-acid sequence, 353 residues long: UDP-N-acetylglucosamine--N-acetylmuramyl-(pentapeptide) pyrophosphoryl-undecaprenol N-acetylglucosamine transferase (353 aa).

UDP-N-acetyl-alpha-D-glucosamine-binding positions include 10–12 (TGG), Asn124, Ser183, and Gln283.

The protein belongs to the glycosyltransferase 28 family. MurG subfamily.

Its subcellular location is the cell inner membrane. It carries out the reaction di-trans,octa-cis-undecaprenyl diphospho-N-acetyl-alpha-D-muramoyl-L-alanyl-D-glutamyl-meso-2,6-diaminopimeloyl-D-alanyl-D-alanine + UDP-N-acetyl-alpha-D-glucosamine = di-trans,octa-cis-undecaprenyl diphospho-[N-acetyl-alpha-D-glucosaminyl-(1-&gt;4)]-N-acetyl-alpha-D-muramoyl-L-alanyl-D-glutamyl-meso-2,6-diaminopimeloyl-D-alanyl-D-alanine + UDP + H(+). It functions in the pathway cell wall biogenesis; peptidoglycan biosynthesis. Functionally, cell wall formation. Catalyzes the transfer of a GlcNAc subunit on undecaprenyl-pyrophosphoryl-MurNAc-pentapeptide (lipid intermediate I) to form undecaprenyl-pyrophosphoryl-MurNAc-(pentapeptide)GlcNAc (lipid intermediate II). This chain is UDP-N-acetylglucosamine--N-acetylmuramyl-(pentapeptide) pyrophosphoryl-undecaprenol N-acetylglucosamine transferase, found in Helicobacter acinonychis (strain Sheeba).